A 405-amino-acid chain; its full sequence is GTPase Obg (405 aa).

Positions 1 to 159 (MRFIDEAVVT…KVLKFELKVV (159 aa)) constitute an Obg domain. The 174-residue stretch at 160-333 (ADVGLIGLPN…IKYHLMNEIE (174 aa)) folds into the OBG-type G domain. GTP contacts are provided by residues 166 to 173 (GLPNAGKS), 191 to 195 (FTTLV), 213 to 216 (DIPG), 283 to 286 (NKID), and 314 to 316 (ATL). Mg(2+) contacts are provided by S173 and T193. The segment covering 371–382 (YRAARKAAREGT) has biased composition (basic and acidic residues). Positions 371–405 (YRAARKAAREGTDLSDDDFDGSDDDDDGVEVIYAP) are disordered. The segment covering 383–399 (DLSDDDFDGSDDDDDGV) has biased composition (acidic residues).

Belongs to the TRAFAC class OBG-HflX-like GTPase superfamily. OBG GTPase family. As to quaternary structure, monomer. Mg(2+) serves as cofactor.

It localises to the cytoplasm. An essential GTPase which binds GTP, GDP and possibly (p)ppGpp with moderate affinity, with high nucleotide exchange rates and a fairly low GTP hydrolysis rate. Plays a role in control of the cell cycle, stress response, ribosome biogenesis and in those bacteria that undergo differentiation, in morphogenesis control. The chain is GTPase Obg from Psychrobacter arcticus (strain DSM 17307 / VKM B-2377 / 273-4).